The chain runs to 182 residues: IQ domain-containing protein F1 (182 aa).

2 stretches are compositionally biased toward basic and acidic residues: residues 1–10 and 31–43; these read MGEEQQKPEE and ETEK…KQEL. The segment at 1-43 is disordered; sequence MGEEQQKPEELNAPTDDAPQEKQQPADLSSETEKAKSKKKQEL. IQ domains follow at residues 45–74 and 101–130; these read EKDQ…SAWI and EQWA…AVRT.

As to quaternary structure, interacts with calmodulin. Specifically expressed in testes and mature spermatozoa (at protein level).

It localises to the cytoplasmic vesicle. Its subcellular location is the secretory vesicle. The protein resides in the acrosome. Its function is as follows. Involved in sperm capacitation and acrosome reaction. The sequence is that of IQ domain-containing protein F1 from Mus musculus (Mouse).